The sequence spans 283 residues: Phosphatidylserine decarboxylase proenzyme (283 aa).

Residues Asp88, His145, and Ser248 each act as charge relay system; for autoendoproteolytic cleavage activity in the active site. Catalysis depends on Ser248, which acts as the Schiff-base intermediate with substrate; via pyruvic acid; for decarboxylase activity. Ser248 bears the Pyruvic acid (Ser); by autocatalysis mark.

It belongs to the phosphatidylserine decarboxylase family. PSD-B subfamily. Prokaryotic type I sub-subfamily. As to quaternary structure, heterodimer of a large membrane-associated beta subunit and a small pyruvoyl-containing alpha subunit. It depends on pyruvate as a cofactor. Post-translationally, is synthesized initially as an inactive proenzyme. Formation of the active enzyme involves a self-maturation process in which the active site pyruvoyl group is generated from an internal serine residue via an autocatalytic post-translational modification. Two non-identical subunits are generated from the proenzyme in this reaction, and the pyruvate is formed at the N-terminus of the alpha chain, which is derived from the carboxyl end of the proenzyme. The autoendoproteolytic cleavage occurs by a canonical serine protease mechanism, in which the side chain hydroxyl group of the serine supplies its oxygen atom to form the C-terminus of the beta chain, while the remainder of the serine residue undergoes an oxidative deamination to produce ammonia and the pyruvoyl prosthetic group on the alpha chain. During this reaction, the Ser that is part of the protease active site of the proenzyme becomes the pyruvoyl prosthetic group, which constitutes an essential element of the active site of the mature decarboxylase.

The protein resides in the cell membrane. It catalyses the reaction a 1,2-diacyl-sn-glycero-3-phospho-L-serine + H(+) = a 1,2-diacyl-sn-glycero-3-phosphoethanolamine + CO2. Its pathway is phospholipid metabolism; phosphatidylethanolamine biosynthesis; phosphatidylethanolamine from CDP-diacylglycerol: step 2/2. In terms of biological role, catalyzes the formation of phosphatidylethanolamine (PtdEtn) from phosphatidylserine (PtdSer). This Acidovorax ebreus (strain TPSY) (Diaphorobacter sp. (strain TPSY)) protein is Phosphatidylserine decarboxylase proenzyme.